Reading from the N-terminus, the 509-residue chain is ATP synthase subunit alpha (509 aa).

171–178 (GDRQTGKT) lines the ATP pocket.

This sequence belongs to the ATPase alpha/beta chains family. F-type ATPases have 2 components, CF(1) - the catalytic core - and CF(0) - the membrane proton channel. CF(1) has five subunits: alpha(3), beta(3), gamma(1), delta(1), epsilon(1). CF(0) has three main subunits: a(1), b(2) and c(9-12). The alpha and beta chains form an alternating ring which encloses part of the gamma chain. CF(1) is attached to CF(0) by a central stalk formed by the gamma and epsilon chains, while a peripheral stalk is formed by the delta and b chains.

Its subcellular location is the cell inner membrane. The catalysed reaction is ATP + H2O + 4 H(+)(in) = ADP + phosphate + 5 H(+)(out). In terms of biological role, produces ATP from ADP in the presence of a proton gradient across the membrane. The alpha chain is a regulatory subunit. In Neorickettsia sennetsu (strain ATCC VR-367 / Miyayama) (Ehrlichia sennetsu), this protein is ATP synthase subunit alpha.